Consider the following 256-residue polypeptide: Calsenilin (256 aa).

Positions 1-30 (MQRAKEVMKVSDGSLLGEPGRTPLSKKEGV) are disordered. S14 carries the post-translational modification Phosphoserine. K26 participates in a covalent cross-link: Glycyl lysine isopeptide (Lys-Gly) (interchain with G-Cter in SUMO1). 2 S-palmitoyl cysteine lipidation sites follow: C45 and C46. 2 positions are modified to phosphoserine: S60 and S63. Residues 67 to 123 (LELSAVRHQPEGLDQLQAQTKFTKKELQSLYRGFKNECPTGLVDEDTFKLIYSQFFP) enclose the EF-hand 1; degenerate domain. A Glycyl lysine isopeptide (Lys-Gly) (interchain with G-Cter in SUMO1) cross-link involves residue K90. EF-hand domains follow at residues 126–161 (DATT…LLRG), 162–197 (TVHE…IYDM), and 210–245 (APLE…DENI). 9 residues coordinate Ca(2+): D175, N177, D179, Y181, E186, D223, N225, D227, and E234. An interaction with KCND2 region spans residues 243–256 (ENIMSSMQLFENVI).

Belongs to the recoverin family. As to quaternary structure, binds to DNA as a homomultimer. Dimerization is induced by binding to calcium. Interacts with the C-terminus of PSEN1 and PSEN2 and with PSEN2 CTF subunit. Associates with KCN1. Component of heteromultimeric potassium channels. Identified in potassium channel complexes containing KCND1, KCND2, KCND3, KCNIP1, KCNIP2, KCNIP3, KCNIP4, DPP6 and DPP10. Interacts with KCND2 and KCND3. Post-translationally, palmitoylated. Palmitoylation enhances association with the plasma membrane. Proteolytically cleaved by caspase-3.

The protein localises to the cytoplasm. Its subcellular location is the cell membrane. It is found in the endoplasmic reticulum. It localises to the golgi apparatus. The protein resides in the nucleus. In terms of biological role, regulatory subunit of Kv4/D (Shal)-type voltage-gated rapidly inactivating A-type potassium channels, such as KCND2/Kv4.2 and KCND3/Kv4.3. Modulates channel expression at the cell membrane, gating characteristics, inactivation kinetics and rate of recovery from inactivation in a calcium-dependent and isoform-specific manner. May play a role in the regulation of PSEN2 proteolytic processing and apoptosis. Together with PSEN2 involved in modulation of amyloid-beta formation. Its function is as follows. Calcium-dependent transcriptional repressor that binds to the DRE element of genes including PDYN and FOS. Affinity for DNA is reduced upon binding to calcium and enhanced by binding to magnesium. Seems to be involved in nociception. The chain is Calsenilin (KCNIP3) from Bos taurus (Bovine).